Here is a 348-residue protein sequence, read N- to C-terminus: Chitinase (348 aa).

A signal peptide spans 1–29 (MKLKKIIPAFPLLSTVAVGLWLTPTQASA). The region spanning 42–348 (KVLVGYWHNW…FATRYSNLVK (307 aa)) is the GH18 domain. The Proton donor role is filled by Glu161.

The protein belongs to the glycosyl hydrolase 18 family.

The protein localises to the secreted. The enzyme catalyses Random endo-hydrolysis of N-acetyl-beta-D-glucosaminide (1-&gt;4)-beta-linkages in chitin and chitodextrins.. The protein operates within glycan degradation; chitin degradation. In terms of biological role, involved in chitin degradation. Catalyzes the cleavage of glycosidic linkages in chitooligosaccharides and in alpha- and beta-chitin. Its activity on chitooligosaccharides increases considerably with degrees of polymerization (the initial rate of hydrolysis for GlcNAc5 is about 130-fold higher than that for GlcNAc3). Its activity is greatly stimulated in the presence of the lytic chitin monooxygenase EfCBM33A, which attacks the crystalline structure of chitin and makes the polymer more accessible to the chitinase; combining the two enzymes leads to rapid and complete depolymerization of crystalline chitin, especially with beta-chitin as a substrate. Is likely involved in a chitin degradation pathway that allows E.faecalis V583 to grow on chitin as a carbon source. The polypeptide is Chitinase (Enterococcus faecalis (strain ATCC 700802 / V583)).